We begin with the raw amino-acid sequence, 163 residues long: MLNHFNFKLKRDVTIIVPGEAFVSNDRVISTILGSCVSVVLYDGVRRLIGVNHYVLVKSDSVVDVLQKGRYGVYAIPMLIDAMIENGASKSNLKAKLFGGANFMAKGTIRVGVENSEFAVNSLTKYGIPVVAQDFDQSKSRKIFVFPENFKVVVEYPDGAKIF.

This sequence belongs to the CheD family.

It catalyses the reaction L-glutaminyl-[protein] + H2O = L-glutamyl-[protein] + NH4(+). Its function is as follows. Probably deamidates glutamine residues to glutamate on methyl-accepting chemotaxis receptors (MCPs), playing an important role in chemotaxis. The protein is Probable chemoreceptor glutamine deamidase CheD of Borrelia turicatae (strain 91E135).